We begin with the raw amino-acid sequence, 96 residues long: Co-chaperonin GroES 2 (96 aa).

The protein belongs to the GroES chaperonin family. As to quaternary structure, heptamer of 7 subunits arranged in a ring. Interacts with the chaperonin GroEL.

It is found in the cytoplasm. Its function is as follows. Together with the chaperonin GroEL, plays an essential role in assisting protein folding. The GroEL-GroES system forms a nano-cage that allows encapsulation of the non-native substrate proteins and provides a physical environment optimized to promote and accelerate protein folding. GroES binds to the apical surface of the GroEL ring, thereby capping the opening of the GroEL channel. The polypeptide is Co-chaperonin GroES 2 (Vibrio parahaemolyticus serotype O3:K6 (strain RIMD 2210633)).